We begin with the raw amino-acid sequence, 263 residues long: Chaperone protein ClpE (263 aa).

The signal sequence occupies residues methionine 1–alanine 34. The span at glutamine 238–asparagine 255 shows a compositional bias: polar residues. Residues glutamine 238–lysine 263 form a disordered region.

It belongs to the periplasmic pilus chaperone family.

Its subcellular location is the periplasm. In terms of biological role, involved in the biogenesis of the CS31A capsule-like antigen. The protein is Chaperone protein ClpE (clpE) of Escherichia coli.